Here is a 207-residue protein sequence, read N- to C-terminus: dITP/XTP pyrophosphatase (207 aa).

11–16 (TGNPGK) serves as a coordination point for substrate. Asp-72 acts as the Proton acceptor in catalysis. Asp-72 lines the Mg(2+) pocket. Substrate contacts are provided by residues Ser-73, 154–157 (FGYD), Lys-177, and 182–183 (HR).

It belongs to the HAM1 NTPase family. Homodimer. Requires Mg(2+) as cofactor.

It catalyses the reaction XTP + H2O = XMP + diphosphate + H(+). The catalysed reaction is dITP + H2O = dIMP + diphosphate + H(+). It carries out the reaction ITP + H2O = IMP + diphosphate + H(+). Pyrophosphatase that catalyzes the hydrolysis of nucleoside triphosphates to their monophosphate derivatives, with a high preference for the non-canonical purine nucleotides XTP (xanthosine triphosphate), dITP (deoxyinosine triphosphate) and ITP. Seems to function as a house-cleaning enzyme that removes non-canonical purine nucleotides from the nucleotide pool, thus preventing their incorporation into DNA/RNA and avoiding chromosomal lesions. The polypeptide is dITP/XTP pyrophosphatase (Thermus thermophilus (strain ATCC BAA-163 / DSM 7039 / HB27)).